The following is a 487-amino-acid chain: Glycogen synthase (487 aa).

Lysine 20 provides a ligand contact to ADP-alpha-D-glucose.

It belongs to the glycosyltransferase 1 family. Bacterial/plant glycogen synthase subfamily.

It carries out the reaction [(1-&gt;4)-alpha-D-glucosyl](n) + ADP-alpha-D-glucose = [(1-&gt;4)-alpha-D-glucosyl](n+1) + ADP + H(+). The protein operates within glycan biosynthesis; glycogen biosynthesis. In terms of biological role, synthesizes alpha-1,4-glucan chains using ADP-glucose. The polypeptide is Glycogen synthase (Aliivibrio fischeri (strain ATCC 700601 / ES114) (Vibrio fischeri)).